We begin with the raw amino-acid sequence, 141 residues long: Nucleoside diphosphate kinase (141 aa).

ATP contacts are provided by K11, F59, R87, T93, R104, and N114. The Pros-phosphohistidine intermediate role is filled by H117.

The protein belongs to the NDK family. As to quaternary structure, homotetramer. Mg(2+) is required as a cofactor.

Its subcellular location is the cytoplasm. The catalysed reaction is a 2'-deoxyribonucleoside 5'-diphosphate + ATP = a 2'-deoxyribonucleoside 5'-triphosphate + ADP. It catalyses the reaction a ribonucleoside 5'-diphosphate + ATP = a ribonucleoside 5'-triphosphate + ADP. Major role in the synthesis of nucleoside triphosphates other than ATP. The ATP gamma phosphate is transferred to the NDP beta phosphate via a ping-pong mechanism, using a phosphorylated active-site intermediate. The chain is Nucleoside diphosphate kinase from Leptothrix cholodnii (strain ATCC 51168 / LMG 8142 / SP-6) (Leptothrix discophora (strain SP-6)).